A 159-amino-acid chain; its full sequence is Small ribosomal subunit protein bS6 (159 aa).

Residues U46 and U52 are each a non-standard amino acid (selenocysteine).

This sequence belongs to the bacterial ribosomal protein bS6 family.

Its function is as follows. Binds together with bS18 to 16S ribosomal RNA. The protein is Small ribosomal subunit protein bS6 of Desulfotalea psychrophila (strain LSv54 / DSM 12343).